The primary structure comprises 549 residues: Sorting nexin-33 (549 aa).

Residues 1–61 (MALKARALYS…PASYVEILRP (61 aa)) enclose the SH3 domain. The segment covering 66–83 (VQVDYSGHTQGYTDSPHQ) has biased composition (polar residues). The tract at residues 66–137 (VQVDYSGHTQ…RPEYTHRPRP (72 aa)) is disordered. Acidic residues predominate over residues 86-101 (YDDDEEDDDDWDDWDD). The span at 110–119 (SGSNGVSRSQ) shows a compositional bias: polar residues. The span at 127-137 (PRPEYTHRPRP) shows a compositional bias: basic and acidic residues. The PX domain occupies 205–315 (FSCSVEEPTK…HFLSCQDEKQ (111 aa)). Residues 346–549 (LQDVEERVDV…EKTLHMYDDL (204 aa)) form the BAR domain.

This sequence belongs to the sorting nexin family.

The protein resides in the cytoplasm. Its subcellular location is the cytosol. The protein localises to the membrane. It is found in the cytoplasmic vesicle membrane. Its function is as follows. Plays a role in the reorganization of the cytoskeleton, endocytosis and cellular vesicle trafficking, both during interphase and at the end of mitotic cell divisions. Required for efficient progress through mitosis and cytokinesis. Required for normal formation of the cleavage furrow at the end of mitosis. Modulates endocytosis of cell-surface proteins. Promotes membrane tubulation (in vitro). May promote the formation of macropinosomes. In Xenopus tropicalis (Western clawed frog), this protein is Sorting nexin-33 (snx33).